The primary structure comprises 326 residues: Pyruvate dehydrogenase E1 component subunit beta (326 aa).

Thiamine diphosphate is bound at residue glutamate 59.

In terms of assembly, heterodimer of an alpha and a beta chain. The cofactor is thiamine diphosphate.

The catalysed reaction is N(6)-[(R)-lipoyl]-L-lysyl-[protein] + pyruvate + H(+) = N(6)-[(R)-S(8)-acetyldihydrolipoyl]-L-lysyl-[protein] + CO2. In terms of biological role, the pyruvate dehydrogenase complex catalyzes the overall conversion of pyruvate to acetyl-CoA and CO(2). It contains multiple copies of three enzymatic components: pyruvate dehydrogenase (E1), dihydrolipoamide acetyltransferase (E2) and lipoamide dehydrogenase (E3). In Rickettsia conorii (strain ATCC VR-613 / Malish 7), this protein is Pyruvate dehydrogenase E1 component subunit beta (pdhB).